A 281-amino-acid chain; its full sequence is Elongation factor Ts (281 aa).

The tract at residues 80 to 83 (TDFV) is involved in Mg(2+) ion dislocation from EF-Tu.

This sequence belongs to the EF-Ts family.

It is found in the cytoplasm. Associates with the EF-Tu.GDP complex and induces the exchange of GDP to GTP. It remains bound to the aminoacyl-tRNA.EF-Tu.GTP complex up to the GTP hydrolysis stage on the ribosome. In Vibrio atlanticus (strain LGP32) (Vibrio splendidus (strain Mel32)), this protein is Elongation factor Ts.